Reading from the N-terminus, the 313-residue chain is Acetaldehyde dehydrogenase 2 (313 aa).

An NAD(+)-binding site is contributed by 12 to 15; the sequence is SGNI. The active-site Acyl-thioester intermediate is Cys132. NAD(+)-binding positions include 163–171 and Asn287; that span reads SAGPGTRAN.

It belongs to the acetaldehyde dehydrogenase family.

It catalyses the reaction acetaldehyde + NAD(+) + CoA = acetyl-CoA + NADH + H(+). The polypeptide is Acetaldehyde dehydrogenase 2 (amnH) (Paraburkholderia xenovorans (strain LB400)).